Consider the following 247-residue polypeptide: UPF0280 protein Mevan_0550 (247 aa).

The protein belongs to the UPF0280 family.

The chain is UPF0280 protein Mevan_0550 from Methanococcus vannielii (strain ATCC 35089 / DSM 1224 / JCM 13029 / OCM 148 / SB).